An 860-amino-acid polypeptide reads, in one-letter code: MLRKQAGEEDSVVLIDMTSPEAGNGCSYGSTAQASEAGKQQVAPSRVGSSANPPIDFVLVWEEDLRSRENPTQDKTDTHEIWRETFLENLRVAGLKIDQRDVQDEAAAVHYILLSAPWAVLCYYAEDLRLKLPLQELPNQASNWSATLLEWLGIPNILLENVPDTPPEYYSCQFKASKLQWFLGSDNQDTFFTSTKRHQILFEILAKTPYGHQKKGLFGIDQLLAEGVFSAAFPLHDGPFSVVPESSQVLGLTQRQVLFKHWARWGKWRKYQPLDHVRRYFGEKVALYFAWLGFYTGWLLPAAVVGTVVFLAGCFLVFSDVPTQELCHSSDTFDMCPLCSDCSFWLLSSACTLAQAGRLFDHGGTVFFSLFMALWAVLLLEYWKRKNATLAYRWDCSDYEDIEERPRPQFAATAPMTALNPITGEDEPYFPEKNRVRRMLAGSVVLLMMVAVVIMCLVSIILYRAVMAIIVSKSNNAFLSAWASRIASLTGSVVNLVFILILSKVYVILAQVLTRWEMHRTQTAFEDAFTLKVFIFQFVNFYASPVYIAFFKGRFVGYPGNYHTLFGVRNEECPAGGCLSELAQELLVIMVGKQIINNVQEVLVPKLKGCWQKLCSRRKKAGMGANPAPWEADYELLPCEGLFHEYLEMVLQFGFVTIFVAACPLAPLFALLNNWVEIRLDARKFVCEYRRPVAERAQDIGIWFHILAGLTHLAVISNAFLLAFSSDFLPRVYYSWTRAPDLRGFLNFTLARAPPTFTSAHNRTCRYRAFRDDDGHYSPTYWTLLAIRLAFVIVFEHVVFSTGRFLDLLVPDIPESVEIKVKREYYLAKQALADNEALLGATGVKGEQPPSSEPSLGLPA.

Over 1–297 (MLRKQAGEED…YFAWLGFYTG (297 aa)) the chain is Cytoplasmic. Positions 24–50 (NGCSYGSTAQASEAGKQQVAPSRVGSS) are disordered. Residues 298 to 318 (WLLPAAVVGTVVFLAGCFLVF) traverse the membrane as a helical segment. Over 319–362 (SDVPTQELCHSSDTFDMCPLCSDCSFWLLSSACTLAQAGRLFDH) the chain is Extracellular. Residues 363–383 (GGTVFFSLFMALWAVLLLEYW) traverse the membrane as a helical segment. Residues 384-441 (KRKNATLAYRWDCSDYEDIEERPRPQFAATAPMTALNPITGEDEPYFPEKNRVRRMLA) are Cytoplasmic-facing. The chain crosses the membrane as a helical span at residues 442-462 (GSVVLLMMVAVVIMCLVSIIL). Over 463 to 492 (YRAVMAIIVSKSNNAFLSAWASRIASLTGS) the chain is Extracellular. Residues 493–513 (VVNLVFILILSKVYVILAQVL) traverse the membrane as a helical segment. The Cytoplasmic portion of the chain corresponds to 514–530 (TRWEMHRTQTAFEDAFT). A helical transmembrane segment spans residues 531–551 (LKVFIFQFVNFYASPVYIAFF). The Extracellular segment spans residues 552 to 652 (KGRFVGYPGN…FHEYLEMVLQ (101 aa)). A helical transmembrane segment spans residues 653 to 673 (FGFVTIFVAACPLAPLFALLN). Topologically, residues 674 to 701 (NWVEIRLDARKFVCEYRRPVAERAQDIG) are cytoplasmic. A helical membrane pass occupies residues 702–722 (IWFHILAGLTHLAVISNAFLL). The Extracellular portion of the chain corresponds to 723–779 (AFSSDFLPRVYYSWTRAPDLRGFLNFTLARAPPTFTSAHNRTCRYRAFRDDDGHYSP). N-linked (GlcNAc...) asparagine glycosylation is found at Asn747 and Asn762. A helical membrane pass occupies residues 780–800 (TYWTLLAIRLAFVIVFEHVVF). Over 801–860 (STGRFLDLLVPDIPESVEIKVKREYYLAKQALADNEALLGATGVKGEQPPSSEPSLGLPA) the chain is Cytoplasmic.

The protein belongs to the anoctamin family.

The protein resides in the cell membrane. It localises to the endoplasmic reticulum. It carries out the reaction a 1,2-diacyl-sn-glycero-3-phospho-L-serine(in) = a 1,2-diacyl-sn-glycero-3-phospho-L-serine(out). It catalyses the reaction a beta-D-galactosyl-(1&lt;-&gt;1')-N-acylsphing-4-enine(out) = a beta-D-galactosyl-(1&lt;-&gt;1')-N-acylsphing-4-enine(in). The enzyme catalyses a 1,2-diacyl-sn-glycero-3-phosphocholine(in) = a 1,2-diacyl-sn-glycero-3-phosphocholine(out). Its function is as follows. Has calcium-dependent phospholipid scramblase activity; scrambles phosphatidylserine, phosphatidylcholine and galactosylceramide. Does not exhibit calcium-activated chloride channel (CaCC) activity. May play a role in cell-cell interactions. The chain is Anoctamin-7 (Ano7) from Rattus norvegicus (Rat).